Reading from the N-terminus, the 237-residue chain is Lectin alpha chain (237 aa).

Residues Glu8 and Asp10 each contribute to the Mn(2+) site. Asp10, Tyr12, Asn14, and Asp19 together coordinate Ca(2+). Tyr12 is an a carbohydrate binding site. Mn(2+)-binding residues include Asp19, His24, and Ser34. Position 99–100 (99–100) interacts with a carbohydrate; sequence LY. Asp208 serves as a coordination point for Ca(2+). Residue Arg228 coordinates a carbohydrate.

Belongs to the leguminous lectin family. Homotetramer. Post-translationally, the beta and gamma chains are produced by partial proteolytic processing of the lectin alpha chain by an asparaginyl endopeptidase. Mixture of 60% alpha lectin and 40% of its beta and gamma proteolytic fragments.

In terms of biological role, D-mannose/D-glucose-binding lectin. Has anti-inflammatory activity in rats. Induces histamine release in mast cells from rat. Induces lymphocyte proliferation and IFNG production. Shows toxicity against the aquatic snail B.glabrata at concentrations higher than 50 ug/ml. The sequence is that of Lectin alpha chain from Dioclea grandiflora (Mucana).